Here is a 377-residue protein sequence, read N- to C-terminus: Probable glucokinase 2 (377 aa).

27-32 (CDVGGS) provides a ligand contact to ATP.

This sequence belongs to the bacterial glucokinase family.

It catalyses the reaction D-glucose + ATP = D-glucose 6-phosphate + ADP + H(+). In Trichomonas vaginalis, this protein is Probable glucokinase 2 (GK2).